The primary structure comprises 948 residues: Coatomer subunit beta-2 (948 aa).

6 HEAT repeats span residues 49 to 87 (ETIP…TDSK), 92 to 126 (PEMI…MKET), 127 to 164 (EIVE…LPHG), 274 to 311 (TAIR…TLHR), 312 to 349 (DIMV…HHNI), and 391 to 428 (EVAS…TNPK).

In terms of assembly, oligomeric complex that consists of at least the alpha, beta, beta', gamma, delta, epsilon and zeta subunits.

Its subcellular location is the cytoplasm. The protein localises to the golgi apparatus membrane. It localises to the cytoplasmic vesicle. It is found in the COPI-coated vesicle membrane. The coatomer is a cytosolic protein complex that binds to dilysine motifs and reversibly associates with Golgi non-clathrin-coated vesicles, which further mediate biosynthetic protein transport from the ER, via the Golgi up to the trans Golgi network. Coatomer complex is required for budding from Golgi membranes, and is essential for the retrograde Golgi-to-ER transport of dilysine-tagged proteins. This chain is Coatomer subunit beta-2, found in Arabidopsis thaliana (Mouse-ear cress).